The sequence spans 259 residues: UPF0246 protein PST_1170 (259 aa).

This sequence belongs to the UPF0246 family.

This chain is UPF0246 protein PST_1170, found in Stutzerimonas stutzeri (strain A1501) (Pseudomonas stutzeri).